The chain runs to 272 residues: Nitrogenase iron protein (272 aa).

ATP is bound at residue glycine 8 to serine 15. Position 94 (cysteine 94) interacts with [4Fe-4S] cluster. An ADP-ribosylarginine; by dinitrogenase reductase ADP-ribosyltransferase modification is found at arginine 97. Residue cysteine 129 coordinates [4Fe-4S] cluster.

This sequence belongs to the NifH/BchL/ChlL family. In terms of assembly, homodimer. [4Fe-4S] cluster serves as cofactor. Post-translationally, the reversible ADP-ribosylation of Arg-97 inactivates the nitrogenase reductase and regulates nitrogenase activity.

The enzyme catalyses N2 + 8 reduced [2Fe-2S]-[ferredoxin] + 16 ATP + 16 H2O = H2 + 8 oxidized [2Fe-2S]-[ferredoxin] + 2 NH4(+) + 16 ADP + 16 phosphate + 6 H(+). Functionally, the key enzymatic reactions in nitrogen fixation are catalyzed by the nitrogenase complex, which has 2 components: the iron protein and the molybdenum-iron protein. In Clostridium acetobutylicum (strain ATCC 824 / DSM 792 / JCM 1419 / IAM 19013 / LMG 5710 / NBRC 13948 / NRRL B-527 / VKM B-1787 / 2291 / W), this protein is Nitrogenase iron protein.